A 1025-amino-acid polypeptide reads, in one-letter code: Kinesin-like protein KIN-14P (1025 aa).

Disordered regions lie at residues 1–87 (MNPM…MHHG) and 263–286 (YSQI…NEEE). The segment covering 15–28 (STPRSPFSPFSPLS) has biased composition (low complexity). The span at 29–41 (VDDRHRNHADTKT) shows a compositional bias: basic and acidic residues. The segment covering 42-53 (PRSPFSPFSPLS) has biased composition (low complexity). Positions 65–75 (KFQQALASSGQ) are enriched in polar residues. Residues 203–425 (HEIATQQLRQ…REMEKKSESN (223 aa)) are a coiled coil. Residues 270-286 (TKTEKSKWEEQKKNEEE) are compositionally biased toward basic and acidic residues. In terms of domain architecture, Kinesin motor spans 509-838 (NIRVFCRVRP…LKFAERVSGV (330 aa)). 593–600 (GQTGSGKT) is a binding site for ATP. Residues 847-879 (KEGKDVRDLMEQLASLKDTIARKDEEIERLQHQ) are a coiled coil. Disordered stretches follow at residues 881–926 (QRLQ…SAEA), 939–977 (AASM…RPLD), and 994–1025 (TGLT…KRWA). Polar residues-rich tracts occupy residues 901-913 (SDTG…SRYS) and 939-948 (AASMGTQGSI). Over residues 950–962 (VTKRPPRISDRAK) the composition is skewed to basic and acidic residues. Composition is skewed to low complexity over residues 963–974 (SVTAKSSTSVTR) and 998–1016 (SSSK…STSS).

It belongs to the TRAFAC class myosin-kinesin ATPase superfamily. Kinesin family. KIN-14 subfamily.

This Arabidopsis thaliana (Mouse-ear cress) protein is Kinesin-like protein KIN-14P.